Consider the following 90-residue polypeptide: MDNIGCKVIVSGIVQAVGFRYFTCREARLHYVMGHAKNLQCGDVEVVMYGPREQIAKMLKWLEKGPKTARVTGITVSEIPYQKTNDFIAC.

Residues 5–90 (GCKVIVSGIV…YQKTNDFIAC (86 aa)) form the Acylphosphatase-like domain. Residues Arg20 and Asn38 contribute to the active site.

This sequence belongs to the acylphosphatase family.

It carries out the reaction an acyl phosphate + H2O = a carboxylate + phosphate + H(+). This Psychromonas ingrahamii (strain DSM 17664 / CCUG 51855 / 37) protein is Acylphosphatase (acyP).